The sequence spans 178 residues: Cytidylate kinase (178 aa).

Position 7–15 (7–15) interacts with ATP; that stretch reads GLPGSGTTS.

The protein belongs to the cytidylate kinase family. Type 2 subfamily.

It is found in the cytoplasm. The enzyme catalyses CMP + ATP = CDP + ADP. The catalysed reaction is dCMP + ATP = dCDP + ADP. This Methanospirillum hungatei JF-1 (strain ATCC 27890 / DSM 864 / NBRC 100397 / JF-1) protein is Cytidylate kinase.